Here is a 442-residue protein sequence, read N- to C-terminus: Hydroxycinnamoyltransferase 2 (442 aa).

Residues His159 and Asp389 each act as proton acceptor in the active site.

Belongs to the plant acyltransferase family. As to expression, expressed in roots and leaves. Expressed at low levels in stems and seeds.

Its function is as follows. Hydroxycinnamoyl transferase that catalyzes the transfer of an acyl from p-coumaryol-CoA to various acyl acceptors. Can use feruloyl-CoA and caffeoyl-CoA as acyl donors. The protein is Hydroxycinnamoyltransferase 2 of Oryza sativa subsp. japonica (Rice).